We begin with the raw amino-acid sequence, 427 residues long: Transcobalamin-2 (427 aa).

The first 18 residues, Met1–Thr18, serve as a signal peptide directing secretion. Disulfide bonds link Cys21/Cys267, Cys83/Cys96, Cys116/Cys309, and Cys165/Cys205. Cob(II)alamin is bound by residues Gln104, Thr152–Gln156, His190, His190–Asp194, Asn242, Ser245, Gln291, and Trp395–Leu397.

Belongs to the eukaryotic cobalamin transport proteins family. In terms of assembly, interacts with CD320 (via LDL-receptor class A domains).

The protein localises to the secreted. Primary vitamin B12-binding and transport protein. Delivers cobalamin to cells. The chain is Transcobalamin-2 (TCN2) from Homo sapiens (Human).